A 171-amino-acid chain; its full sequence is tRNA-specific adenosine deaminase (171 aa).

A CMP/dCMP-type deaminase domain is found at 6-133 (EEQTYFMQEA…ERLNHRVQVE (128 aa)). Zn(2+) is bound at residue H57. E59 serves as the catalytic Proton donor. Residues C87 and C90 each contribute to the Zn(2+) site.

It belongs to the cytidine and deoxycytidylate deaminase family. In terms of assembly, homodimer. The cofactor is Zn(2+).

The enzyme catalyses adenosine(34) in tRNA + H2O + H(+) = inosine(34) in tRNA + NH4(+). In terms of biological role, catalyzes the deamination of adenosine to inosine at the wobble position 34 of tRNA(Arg2). In Streptococcus pyogenes serotype M1, this protein is tRNA-specific adenosine deaminase.